Consider the following 1234-residue polypeptide: Chromosome-associated kinesin KIF4B (1234 aa).

Residues 9-336 enclose the Kinesin motor domain; sequence PVRVALRCRP…LRYADRARKI (328 aa). 88–95 provides a ligand contact to ATP; that stretch reads GQTGSGKT. Positions 350 to 999 form a coiled coil; sequence ELNHLKQQVQ…IKQKLILLQV (650 aa). Ser-394 carries the phosphoserine modification. Disordered regions lie at residues 494-513 and 712-737; these read EEAQVETSPETSRSSDAFTT and KRLKDALQKQREVTDKRKETQSHGKE. The span at 498–513 shows a compositional bias: polar residues; the sequence is VETSPETSRSSDAFTT. Residues 663–1234 are interaction with PRC1; the sequence is QWKQKKDKEV…GCSPIEEEAH (572 aa). A compositionally biased stretch (basic and acidic residues) spans 713–737; it reads RLKDALQKQREVTDKRKETQSHGKE. Residues 793-798 carry the Nuclear localization signal motif; the sequence is PKLRKC. Thr-799 is subject to Phosphothreonine. Ser-801, Ser-951, Ser-1001, Ser-1013, Ser-1017, and Ser-1028 each carry phosphoserine. A globular region spans residues 1000 to 1234; it reads ASRQKHLPND…GCSPIEEEAH (235 aa). 4 disordered regions span residues 1007–1030, 1052–1076, 1122–1143, and 1183–1234; these read PNDTLLSPDSSFEYIPPKPKPSRV, VNEHEDGDGDGDSDEGDDEEWKPTK, RQQGKDSLGTVEQTQDSEGSFK, and TAPA…EEAH. The span at 1056–1071 shows a compositional bias: acidic residues; that stretch reads EDGDGDGDSDEGDDEE. Positions 1086–1144 are CRD; required for [4Fe-4S] cluster binding and localization to the spindle midzone and midbody during anaphase and telophase; it reads QGCSCKGWCGNKQCGCRKQKSDCGVDCSCDPTKCRNRQQGKDSLGTVEQTQDSEGSFKL. Residue Ser-1128 is modified to Phosphoserine. Residue Thr-1183 is modified to Phosphothreonine. Ser-1188 bears the Phosphoserine mark. Lys-1196 participates in a covalent cross-link: Glycyl lysine isopeptide (Lys-Gly) (interchain with G-Cter in SUMO2). Ser-1227 carries the phosphoserine modification.

The protein belongs to the TRAFAC class myosin-kinesin ATPase superfamily. Kinesin family. Chromokinesin subfamily. Requires [2Fe-2S] cluster as cofactor. The cofactor is [4Fe-4S] cluster. In terms of tissue distribution, specifically expressed in testis.

The protein resides in the nucleus matrix. It localises to the cytoplasm. Its subcellular location is the cytoskeleton. Iron-sulfur (Fe-S) cluster binding motor protein that has a role in chromosome segregation during mitosis. Translocates PRC1 to the plus ends of interdigitating spindle microtubules during the metaphase to anaphase transition, an essential step for the formation of an organized central spindle midzone and midbody and for successful cytokinesis. May play a role in mitotic chromosomal positioning and bipolar spindle stabilization. This chain is Chromosome-associated kinesin KIF4B (KIF4B), found in Homo sapiens (Human).